We begin with the raw amino-acid sequence, 257 residues long: MGQKVNPIGFRVGVIRDWDSKWYADKKIVPALVKEDAVIRKFLNKKYNNAAVSHVEIERLKELKVKKRVKITLHSGKPGVVIGREAATMKETIASLEKLTKKEIVFNVVEVRKPEVVATLVAQSMAEQLENRASFRKSTKNCYAKSIKVRAKGIKTLSQRLGGREMARTEGYSEGQVPLHTLRADVEYATAEAQTTYGILGIKVWIYHGEILPGQSHEELRKERQSSASSNHGGGKRRPSRKGPRRSQEDAATEGGN.

A KH type-2 domain is found at 39–112; that stretch reads IRKFLNKKYN…EIVFNVVEVR (74 aa). Positions 217–257 are disordered; sequence HEELRKERQSSASSNHGGGKRRPSRKGPRRSQEDAATEGGN. Residues 234 to 245 show a composition bias toward basic residues; that stretch reads GGKRRPSRKGPR.

The protein belongs to the universal ribosomal protein uS3 family. In terms of assembly, part of the 30S ribosomal subunit. Forms a tight complex with proteins S10 and S14.

Functionally, binds the lower part of the 30S subunit head. Binds mRNA in the 70S ribosome, positioning it for translation. This is Small ribosomal subunit protein uS3 from Haploplasma axanthum (Acholeplasma axanthum).